Here is a 1071-residue protein sequence, read N- to C-terminus: ATP-dependent helicase/deoxyribonuclease subunit B (1071 aa).

Belongs to the helicase family. AddB/RexB type 2 subfamily. In terms of assembly, heterodimer of AddA and RexB. Mg(2+) serves as cofactor.

Functionally, the heterodimer acts as both an ATP-dependent DNA helicase and an ATP-dependent, dual-direction single-stranded exonuclease. Recognizes the chi site generating a DNA molecule suitable for the initiation of homologous recombination. This subunit has 5' -&gt; 3' nuclease activity but not helicase activity. The polypeptide is ATP-dependent helicase/deoxyribonuclease subunit B (Streptococcus pyogenes serotype M6 (strain ATCC BAA-946 / MGAS10394)).